The sequence spans 160 residues: SsrA-binding protein (160 aa).

Residues 132 to 160 form a disordered region; it reads KIHDKRDDMQKKDAQQEIARALKSSNRYE. Basic and acidic residues predominate over residues 135–146; it reads DKRDDMQKKDAQ.

This sequence belongs to the SmpB family.

The protein localises to the cytoplasm. Functionally, required for rescue of stalled ribosomes mediated by trans-translation. Binds to transfer-messenger RNA (tmRNA), required for stable association of tmRNA with ribosomes. tmRNA and SmpB together mimic tRNA shape, replacing the anticodon stem-loop with SmpB. tmRNA is encoded by the ssrA gene; the 2 termini fold to resemble tRNA(Ala) and it encodes a 'tag peptide', a short internal open reading frame. During trans-translation Ala-aminoacylated tmRNA acts like a tRNA, entering the A-site of stalled ribosomes, displacing the stalled mRNA. The ribosome then switches to translate the ORF on the tmRNA; the nascent peptide is terminated with the 'tag peptide' encoded by the tmRNA and targeted for degradation. The ribosome is freed to recommence translation, which seems to be the essential function of trans-translation. This is SsrA-binding protein from Leptospira borgpetersenii serovar Hardjo-bovis (strain JB197).